The primary structure comprises 85 residues: WAP four-disulfide core domain protein 12 (85 aa).

A signal peptide spans methionine 1 to glycine 21. In terms of domain architecture, WAP spans lysine 25–valine 72. Cystine bridges form between cysteine 32–cysteine 60, cysteine 39–cysteine 64, cysteine 47–cysteine 59, and cysteine 53–cysteine 68.

In terms of tissue distribution, constitutively expressed in tongue.

It localises to the secreted. Functionally, antibacterial protein which inhibits the growth of E.coli and S.aureus. Putative acid-stable proteinase inhibitor. This is WAP four-disulfide core domain protein 12 from Mus musculus (Mouse).